A 575-amino-acid chain; its full sequence is MAVAPNVSDLQSGVVKASQMARAALEHTLQHHQLQDFILAAILASIILLIIRNSMLSPLRGIPGPRLAGLTSLYEFYYDVIKNGTYAHQHPKMHQQYDSTIIRISPNHVHIADPELFAIGPAGSRFRKARYYYNSIGMSTAIGSHYDVEAHHRHRSTMAVGFSTKSLQAFDPIIVNYAREIMDIIASRGLKGTPVVLSHHTQAYTIDVVAKISFGQPVGAMHEVGDHPPTVQAMDCFSNHFNFTKHFPYWQLILPFMPTSAVKRIMPGVHYIKEVGTRLITNLIEQRRIEGRLDEEYQEGKGAIFETLLKPNPKKQYPAPDLNGLVEDACAFLVGGSDTTGLTLQAVTLFVLRNPDVLCALRAELDSASEFIRDSFDIHQVSKLPWLTAVIRETMRLLPPTPGPLPREVPPEGIRVGKYFLPGGNANKGPGRQPGDAEFRPLSPAVCSLYITIPASTQTQKGSSRSVGWEKAVRAWWSGGTHSVVDHARVSDASTSCAYFVFSSSIICGREQHTDERFLACRVAWHELLAFLALLFLRFDLELYESDETNLEWTEHMFTRIRAPVQVRIMKDRWA.

Asn6 is a glycosylation site (N-linked (GlcNAc...) asparagine). Residues 37–57 (FILAAILASIILLIIRNSMLS) form a helical membrane-spanning segment. Residues Asn83 and Asn242 are each glycosylated (N-linked (GlcNAc...) asparagine). Residue Cys521 coordinates heme.

This sequence belongs to the cytochrome P450 family. It depends on heme as a cofactor.

It is found in the membrane. It functions in the pathway secondary metabolite biosynthesis. Cytochrome P450 monooxygenase; part of the gene cluster that mediates the biosynthesis of oxepinamides, derivatives of anthranilyl-containing tripeptides that share an oxepin ring and a fused pyrimidinone moiety. The nonribosomal peptide synthetase (NRPS) opaA assembles the quinazolinone core with D-Phe incorporation. The first adenylation domain (A1) of opaA loads and activates anthranilic acid whereas the second A domain (A2) is for activating of L-Phe, which is then converted to D-form by the E domain. The third A domain (A3) is responsible for L-Ile activation and the terminal condensation domain C3 for cyclization and releasing the NRPS product protuboxepin K. The cytochrome P450 monooxygenase opaB then catalyzes alone the oxepin ring formation to convert protuboxepin K into protuboxepin A. The flavoenzyme opaC installs subsequently one hydroxyl group at the oxepin ring, accompanied by double bond migration, to form 15-epi-oxepinamide E. The epimerase opaE changes the D-Phe residue back to L-form, leading to oxepinamide E, which is further methylated at the hydroxyl group at C-12 by the O-methyltransferase OpaF to yield oxepinamide F. This chain is Cytochrome P450 monooxygenase opaB, found in Aspergillus ustus.